A 150-amino-acid chain; its full sequence is D-aminoacyl-tRNA deacylase (150 aa).

A Gly-cisPro motif, important for rejection of L-amino acids motif is present at residues 138–139 (GP).

The protein belongs to the DTD family. As to quaternary structure, homodimer.

Its subcellular location is the cytoplasm. It carries out the reaction glycyl-tRNA(Ala) + H2O = tRNA(Ala) + glycine + H(+). The enzyme catalyses a D-aminoacyl-tRNA + H2O = a tRNA + a D-alpha-amino acid + H(+). In terms of biological role, an aminoacyl-tRNA editing enzyme that deacylates mischarged D-aminoacyl-tRNAs. Also deacylates mischarged glycyl-tRNA(Ala), protecting cells against glycine mischarging by AlaRS. Acts via tRNA-based rather than protein-based catalysis; rejects L-amino acids rather than detecting D-amino acids in the active site. By recycling D-aminoacyl-tRNA to D-amino acids and free tRNA molecules, this enzyme counteracts the toxicity associated with the formation of D-aminoacyl-tRNA entities in vivo and helps enforce protein L-homochirality. The chain is D-aminoacyl-tRNA deacylase from Phocaeicola vulgatus (strain ATCC 8482 / DSM 1447 / JCM 5826 / CCUG 4940 / NBRC 14291 / NCTC 11154) (Bacteroides vulgatus).